A 126-amino-acid chain; its full sequence is Small ribosomal subunit protein uS12 (126 aa).

The residue at position 89 (D89) is a 3-methylthioaspartic acid.

It belongs to the universal ribosomal protein uS12 family. In terms of assembly, part of the 30S ribosomal subunit. Contacts proteins S8 and S17. May interact with IF1 in the 30S initiation complex.

Its function is as follows. With S4 and S5 plays an important role in translational accuracy. In terms of biological role, interacts with and stabilizes bases of the 16S rRNA that are involved in tRNA selection in the A site and with the mRNA backbone. Located at the interface of the 30S and 50S subunits, it traverses the body of the 30S subunit contacting proteins on the other side and probably holding the rRNA structure together. The combined cluster of proteins S8, S12 and S17 appears to hold together the shoulder and platform of the 30S subunit. This Polynucleobacter asymbioticus (strain DSM 18221 / CIP 109841 / QLW-P1DMWA-1) (Polynucleobacter necessarius subsp. asymbioticus) protein is Small ribosomal subunit protein uS12.